A 790-amino-acid chain; its full sequence is Histone-lysine N-methyltransferase, H3 lysine-9 specific SUVH6 (790 aa).

A disordered region spans residues 251–271 (QLRILGVGTSSGSSSGDSSRN). Low complexity predominate over residues 256 to 268 (GVGTSSGSSSGDS). The 153-residue stretch at 330 to 482 (GEVPGVEVGD…MNVFKFQLRR (153 aa)) folds into the YDG domain. A Pre-SET domain is found at 551–613 (KSCCCTTRCT…SCYLRVTQHG (63 aa)). Zn(2+) contacts are provided by C553, C554, C555, C559, C567, C569, C595, C599, C601, and C605. One can recognise an SET domain in the interval 616–760 (LPLEIFKTKS…PLQELCYDYN (145 aa)). S-adenosyl-L-methionine contacts are provided by residues 626–628 (RGW), D662, Y664, R714, and 717–718 (NH). 4 residues coordinate Zn(2+): C720, C778, C780, and C785. One can recognise a Post-SET domain in the interval 774-790 (KQKPCFCGAAVCRRRLY).

The protein belongs to the class V-like SAM-binding methyltransferase superfamily. Histone-lysine methyltransferase family. Suvar3-9 subfamily.

It localises to the nucleus. The protein localises to the chromosome. Its subcellular location is the centromere. It carries out the reaction N(6)-methyl-L-lysyl(9)-[histone H3] + S-adenosyl-L-methionine = N(6),N(6)-dimethyl-L-lysyl(9)-[histone H3] + S-adenosyl-L-homocysteine + H(+). The enzyme catalyses L-lysyl(9)-[histone H3] + S-adenosyl-L-methionine = N(6)-methyl-L-lysyl(9)-[histone H3] + S-adenosyl-L-homocysteine + H(+). Histone methyltransferase. Methylates 'Lys-9' of histone H3. H3 'Lys-9' methylation represents a specific tag for epigenetic transcriptional repression. Seems to act preferentially on dsMRNA. The chain is Histone-lysine N-methyltransferase, H3 lysine-9 specific SUVH6 (SUVH6) from Arabidopsis thaliana (Mouse-ear cress).